The following is a 495-amino-acid chain: Cardiolipin synthase A (495 aa).

2 helical membrane-spanning segments follow: residues isoleucine 9–threonine 29 and methionine 46–leucine 66. PLD phosphodiesterase domains lie at methionine 227–lysine 254 and glutamate 408–serine 435. Residues histidine 232, lysine 234, aspartate 239, histidine 413, lysine 415, and aspartate 420 contribute to the active site.

It belongs to the phospholipase D family. Cardiolipin synthase subfamily. ClsA sub-subfamily.

The protein localises to the cell membrane. The enzyme catalyses 2 a 1,2-diacyl-sn-glycero-3-phospho-(1'-sn-glycerol) = a cardiolipin + glycerol. In terms of biological role, catalyzes the reversible phosphatidyl group transfer from one phosphatidylglycerol molecule to another to form cardiolipin (CL) (diphosphatidylglycerol) and glycerol. The polypeptide is Cardiolipin synthase A (Wigglesworthia glossinidia brevipalpis).